The sequence spans 313 residues: Sideroflexin-4 (313 aa).

A run of 2 helical transmembrane segments spans residues 87–107 (AAFLPVTAPMVFLLMMPDTGI) and 141–161 (TLLGAGVSVSSTFIGLIPHLF). K173 is modified (N6-acetyllysine). Helical transmembrane passes span 175–191 (TLPIVFLAQVSGMNVFA), 230–247 (AVLFGTSALAPELFIHIF), and 269–289 (FFMMGLMVPVSFSMFPQIGQI).

The protein belongs to the sideroflexin family. As to expression, largely restricted to kidney, brain and heart.

It is found in the mitochondrion inner membrane. Functionally, mitochondrial amino-acid transporter. Does not act as a serine transporter: not able to mediate transport of serine into mitochondria. The polypeptide is Sideroflexin-4 (Mus musculus (Mouse)).